A 95-amino-acid chain; its full sequence is Aspartyl/glutamyl-tRNA(Asn/Gln) amidotransferase subunit C (95 aa).

Belongs to the GatC family. In terms of assembly, heterotrimer of A, B and C subunits.

The enzyme catalyses L-glutamyl-tRNA(Gln) + L-glutamine + ATP + H2O = L-glutaminyl-tRNA(Gln) + L-glutamate + ADP + phosphate + H(+). It carries out the reaction L-aspartyl-tRNA(Asn) + L-glutamine + ATP + H2O = L-asparaginyl-tRNA(Asn) + L-glutamate + ADP + phosphate + 2 H(+). Its function is as follows. Allows the formation of correctly charged Asn-tRNA(Asn) or Gln-tRNA(Gln) through the transamidation of misacylated Asp-tRNA(Asn) or Glu-tRNA(Gln) in organisms which lack either or both of asparaginyl-tRNA or glutaminyl-tRNA synthetases. The reaction takes place in the presence of glutamine and ATP through an activated phospho-Asp-tRNA(Asn) or phospho-Glu-tRNA(Gln). The protein is Aspartyl/glutamyl-tRNA(Asn/Gln) amidotransferase subunit C of Methylobacterium nodulans (strain LMG 21967 / CNCM I-2342 / ORS 2060).